The chain runs to 513 residues: Histidine ammonia-lyase (513 aa).

Residues 144–146 (ASG) constitute a cross-link (5-imidazolinone (Ala-Gly)). Serine 145 is subject to 2,3-didehydroalanine (Ser).

Belongs to the PAL/histidase family. In terms of processing, contains an active site 4-methylidene-imidazol-5-one (MIO), which is formed autocatalytically by cyclization and dehydration of residues Ala-Ser-Gly.

Its subcellular location is the cytoplasm. The enzyme catalyses L-histidine = trans-urocanate + NH4(+). It functions in the pathway amino-acid degradation; L-histidine degradation into L-glutamate; N-formimidoyl-L-glutamate from L-histidine: step 1/3. This is Histidine ammonia-lyase from Streptococcus sanguinis (strain SK36).